Consider the following 417-residue polypeptide: NADH-quinone oxidoreductase subunit D (417 aa).

The protein belongs to the complex I 49 kDa subunit family. As to quaternary structure, NDH-1 is composed of 14 different subunits. Subunits NuoB, C, D, E, F, and G constitute the peripheral sector of the complex.

The protein resides in the cell inner membrane. It carries out the reaction a quinone + NADH + 5 H(+)(in) = a quinol + NAD(+) + 4 H(+)(out). NDH-1 shuttles electrons from NADH, via FMN and iron-sulfur (Fe-S) centers, to quinones in the respiratory chain. The immediate electron acceptor for the enzyme in this species is believed to be ubiquinone. Couples the redox reaction to proton translocation (for every two electrons transferred, four hydrogen ions are translocated across the cytoplasmic membrane), and thus conserves the redox energy in a proton gradient. This is NADH-quinone oxidoreductase subunit D from Nitrosomonas eutropha (strain DSM 101675 / C91 / Nm57).